A 143-amino-acid polypeptide reads, in one-letter code: Hemoglobin subunit alpha (143 aa).

The Globin domain maps to 2 to 143; it reads TLSDKDKSTV…VALALAERYR (142 aa). Residue H60 participates in O2 binding. Heme b is bound at residue H89.

It belongs to the globin family. As to quaternary structure, heterotetramer of two alpha chains and two beta chains. In terms of tissue distribution, red blood cells.

Involved in oxygen transport from gills to the various peripheral tissues. This Thunnus thynnus (Atlantic bluefin tuna) protein is Hemoglobin subunit alpha (hba).